Here is a 252-residue protein sequence, read N- to C-terminus: Indole-3-glycerol phosphate synthase (252 aa).

Belongs to the TrpC family.

The catalysed reaction is 1-(2-carboxyphenylamino)-1-deoxy-D-ribulose 5-phosphate + H(+) = (1S,2R)-1-C-(indol-3-yl)glycerol 3-phosphate + CO2 + H2O. The protein operates within amino-acid biosynthesis; L-tryptophan biosynthesis; L-tryptophan from chorismate: step 4/5. In Leptospira interrogans serogroup Icterohaemorrhagiae serovar copenhageni (strain Fiocruz L1-130), this protein is Indole-3-glycerol phosphate synthase.